The following is a 635-amino-acid chain: Rab11 family-interacting protein 4 (635 aa).

Residues 49–84 enclose the EF-hand domain; the sequence is GQGEEVEKLVKCLDPNDLGRINFKDFCRGVFAMKGC. The Ca(2+) site is built by aspartate 62, asparagine 64, arginine 68, and aspartate 73. The tract at residues 82 to 635 is necessary for interaction with RAB11A, subcellular location, homo- or heterooligomerization; sequence KGCEELLKDV…HNPSILEIKH (554 aa). Disordered regions lie at residues 147 to 176 and 216 to 258; these read GPQE…EKEP and EDYG…QTPR. The span at 216-225 shows a compositional bias: acidic residues; the sequence is EDYGEGDDVD. Positions 279-615 form a coiled coil; sequence KINLLNDLEA…EEINFRLRQY (337 aa). Residues 572–634 form the FIP-RBD domain; sequence EAKNLFATQT…DHNPSILEIK (63 aa).

As to quaternary structure, homodimer. Forms a complex with Rab11 (RAB11A or RAB11B) and ARF6. Interacts with RAB11A; the interaction is direct. Forms a heterooligomeric complex with RAB11FIP2, RAB11FIP3 and RAB11FIP5. Interacts with ECPAS. As to expression, strongly expressed in the developing retina. Expressed predominantly in neural tissues.

Its subcellular location is the recycling endosome membrane. It is found in the cleavage furrow. The protein localises to the midbody. It localises to the cytoplasmic vesicle. In terms of biological role, acts as a regulator of endocytic traffic by participating in membrane delivery. Required for the abscission step in cytokinesis, possibly by acting as an 'address tag' delivering recycling endosome membranes to the cleavage furrow during late cytokinesis. May play a role in differentiation during retinal development, in a Rab11-independent manner. The sequence is that of Rab11 family-interacting protein 4 (Rab11fip4) from Mus musculus (Mouse).